The following is a 301-amino-acid chain: UDP-3-O-acyl-N-acetylglucosamine deacetylase (301 aa).

Zn(2+) is bound by residues His81, His237, and Asp241. The active-site Proton donor is the His264.

It belongs to the LpxC family. It depends on Zn(2+) as a cofactor.

The enzyme catalyses a UDP-3-O-[(3R)-3-hydroxyacyl]-N-acetyl-alpha-D-glucosamine + H2O = a UDP-3-O-[(3R)-3-hydroxyacyl]-alpha-D-glucosamine + acetate. It participates in glycolipid biosynthesis; lipid IV(A) biosynthesis; lipid IV(A) from (3R)-3-hydroxytetradecanoyl-[acyl-carrier-protein] and UDP-N-acetyl-alpha-D-glucosamine: step 2/6. Functionally, catalyzes the hydrolysis of UDP-3-O-myristoyl-N-acetylglucosamine to form UDP-3-O-myristoylglucosamine and acetate, the committed step in lipid A biosynthesis. The sequence is that of UDP-3-O-acyl-N-acetylglucosamine deacetylase from Leptospira borgpetersenii serovar Hardjo-bovis (strain JB197).